A 447-amino-acid polypeptide reads, in one-letter code: Transducin beta-like protein 2 (447 aa).

A disordered region spans residues 38 to 72 (RSGRPACQKANGFPPDKSSGSKKQKQYQRIRKEKP). A compositionally biased stretch (basic residues) spans 57–69 (GSKKQKQYQRIRK). 7 WD repeats span residues 88 to 127 (SHSGNISCMDFSSNGKYLATCADDRTIRIWSTKDFLQREH), 134 to 174 (VELD…DGGY), 186 to 226 (KHKA…STIN), 228 to 267 (NQMNNTHAAVSPCGRFVASCGFTPDVKVWEVCFGKKGEFQ), 277 to 316 (GHSAAVHSFAFSNDSRRMASVSKDGTWKLWDTDVEYKKKQ), 329 to 367 (AAGAAPCRLALSPNAQVLALASGSSIHLYNTRRGEKEEC), and 371 to 409 (VHGECIANLSFDITGRFLASCGDRAVRLFHNTPGHRAMV). Lysine 168 is covalently cross-linked (Glycyl lysine isopeptide (Lys-Gly) (interchain with G-Cter in SUMO2)). Threonine 433 bears the Phosphothreonine; by ATM or ATR mark.

This is Transducin beta-like protein 2 (TBL2) from Homo sapiens (Human).